The chain runs to 120 residues: MFSLPGYEYFLGFLIIAAAVPILALVTNLIVAPKGRTGERKLTYESGMEPIGGAWIQFNIRYYMFALVFVIFDVETVFLYPWAVAFNRLGLLAFIEALIFIAILVIALAYAWRKGALEWS.

A run of 3 helical transmembrane segments spans residues 10 to 30 (FLGFLIIAAAVPILALVTNLI), 64 to 84 (MFALVFVIFDVETVFLYPWAV), and 89 to 109 (LGLLAFIEALIFIAILVIALA).

This sequence belongs to the complex I subunit 3 family. As to quaternary structure, NDH-1 can be composed of about 15 different subunits; different subcomplexes with different compositions have been identified which probably have different functions.

The protein localises to the cellular thylakoid membrane. The catalysed reaction is a plastoquinone + NADH + (n+1) H(+)(in) = a plastoquinol + NAD(+) + n H(+)(out). It carries out the reaction a plastoquinone + NADPH + (n+1) H(+)(in) = a plastoquinol + NADP(+) + n H(+)(out). NDH-1 shuttles electrons from an unknown electron donor, via FMN and iron-sulfur (Fe-S) centers, to quinones in the respiratory and/or the photosynthetic chain. The immediate electron acceptor for the enzyme in this species is believed to be plastoquinone. Couples the redox reaction to proton translocation, and thus conserves the redox energy in a proton gradient. Cyanobacterial NDH-1 also plays a role in inorganic carbon-concentration. The sequence is that of NAD(P)H-quinone oxidoreductase subunit 3 from Prochlorococcus marinus (strain MIT 9515).